The chain runs to 299 residues: F-actin-capping protein subunit alpha-3 (299 aa).

Serine 2 and serine 290 each carry phosphoserine.

This sequence belongs to the F-actin-capping protein alpha subunit family. In terms of assembly, component of the F-actin capping complex, composed of a heterodimer of an alpha and a beta subunit. Component of the WASH complex, composed of F-actin-capping protein subunit alpha (CAPZA1, CAPZA2 or CAPZA3), F-actin-capping protein subunit beta (CAPZB), WASHC1, WASHC2, WASHC3, WASHC4 and WASHC5. Exclusively expressed in the testis.

It localises to the cytoplasm. The protein localises to the cytoskeleton. Functionally, F-actin-capping proteins bind in a Ca(2+)-independent manner to the fast growing ends of actin filaments (barbed end) thereby blocking the exchange of subunits at these ends. Unlike other capping proteins (such as gelsolin and severin), these proteins do not sever actin filaments. May play a role in the morphogenesis of spermatid. The chain is F-actin-capping protein subunit alpha-3 (Capza3) from Mus musculus (Mouse).